Consider the following 252-residue polypeptide: Adapter protein MecA (252 aa).

Belongs to the MecA family. In terms of assembly, homodimer.

In terms of biological role, enables the recognition and targeting of unfolded and aggregated proteins to the ClpC protease or to other proteins involved in proteolysis. This Streptococcus uberis (strain ATCC BAA-854 / 0140J) protein is Adapter protein MecA.